The primary structure comprises 320 residues: Glucokinase (320 aa).

Position 12–17 (12–17) interacts with ATP; it reads GDIGGT.

This sequence belongs to the bacterial glucokinase family.

The protein localises to the cytoplasm. The enzyme catalyses D-glucose + ATP = D-glucose 6-phosphate + ADP + H(+). This is Glucokinase from Nitrobacter hamburgensis (strain DSM 10229 / NCIMB 13809 / X14).